Reading from the N-terminus, the 472-residue chain is Argininosuccinate lyase (472 aa).

Belongs to the lyase 1 family. Argininosuccinate lyase subfamily.

The protein localises to the cytoplasm. The enzyme catalyses 2-(N(omega)-L-arginino)succinate = fumarate + L-arginine. Its pathway is amino-acid biosynthesis; L-arginine biosynthesis; L-arginine from L-ornithine and carbamoyl phosphate: step 3/3. The polypeptide is Argininosuccinate lyase (Synechococcus sp. (strain CC9311)).